The primary structure comprises 324 residues: Ribose-phosphate pyrophosphokinase (324 aa).

ATP-binding positions include 45-47 (NGE) and 104-105 (RQ). Residues His-138 and Asp-178 each coordinate Mg(2+). Residue Lys-201 is part of the active site. Residues Arg-203, Asp-229, and 233–237 (DTGGT) contribute to the D-ribose 5-phosphate site.

This sequence belongs to the ribose-phosphate pyrophosphokinase family. Class I subfamily. In terms of assembly, homohexamer. Requires Mg(2+) as cofactor.

The protein localises to the cytoplasm. The enzyme catalyses D-ribose 5-phosphate + ATP = 5-phospho-alpha-D-ribose 1-diphosphate + AMP + H(+). The protein operates within metabolic intermediate biosynthesis; 5-phospho-alpha-D-ribose 1-diphosphate biosynthesis; 5-phospho-alpha-D-ribose 1-diphosphate from D-ribose 5-phosphate (route I): step 1/1. Involved in the biosynthesis of the central metabolite phospho-alpha-D-ribosyl-1-pyrophosphate (PRPP) via the transfer of pyrophosphoryl group from ATP to 1-hydroxyl of ribose-5-phosphate (Rib-5-P). This Streptomyces coelicolor (strain ATCC BAA-471 / A3(2) / M145) protein is Ribose-phosphate pyrophosphokinase.